The sequence spans 164 residues: Large ribosomal subunit protein uL10 (164 aa).

Belongs to the universal ribosomal protein uL10 family. Part of the ribosomal stalk of the 50S ribosomal subunit. The N-terminus interacts with L11 and the large rRNA to form the base of the stalk. The C-terminus forms an elongated spine to which L12 dimers bind in a sequential fashion forming a multimeric L10(L12)X complex.

Its function is as follows. Forms part of the ribosomal stalk, playing a central role in the interaction of the ribosome with GTP-bound translation factors. The polypeptide is Large ribosomal subunit protein uL10 (Aliivibrio salmonicida (strain LFI1238) (Vibrio salmonicida (strain LFI1238))).